A 111-amino-acid polypeptide reads, in one-letter code: MKVLVLLLVTLAVVYAAPDPRGILINLEDGEICMNSAQCKSSCCQHFSPLGVARCTRKASENSECSPKTLYGIYYKCPCERGLTCESDRTIIGAITNTNYGICLDAGRSKE.

The signal sequence occupies residues Met1–Ala16. Residues Ala17–Arg21 constitute a propeptide, enterostatin, activation peptide. 5 cysteine pairs are disulfide-bonded: Cys33–Cys44, Cys39–Cys55, Cys43–Cys77, Cys65–Cys85, and Cys79–Cys103.

This sequence belongs to the colipase family. As to quaternary structure, forms a 1:1 stoichiometric complex with pancreatic lipase. Expressed by the pancreas.

Its subcellular location is the secreted. Its function is as follows. Colipase is a cofactor of pancreatic lipase. It allows the lipase to anchor itself to the lipid-water interface. Without colipase the enzyme is washed off by bile salts, which have an inhibitory effect on the lipase. In terms of biological role, enterostatin has a biological activity as a satiety signal. This is Colipase (CLPS) from Ictidomys tridecemlineatus (Thirteen-lined ground squirrel).